Here is a 253-residue protein sequence, read N- to C-terminus: Imidazole glycerol phosphate synthase subunit HisF (253 aa).

Residues D11 and D130 contribute to the active site.

It belongs to the HisA/HisF family. In terms of assembly, heterodimer of HisH and HisF.

Its subcellular location is the cytoplasm. It catalyses the reaction 5-[(5-phospho-1-deoxy-D-ribulos-1-ylimino)methylamino]-1-(5-phospho-beta-D-ribosyl)imidazole-4-carboxamide + L-glutamine = D-erythro-1-(imidazol-4-yl)glycerol 3-phosphate + 5-amino-1-(5-phospho-beta-D-ribosyl)imidazole-4-carboxamide + L-glutamate + H(+). Its pathway is amino-acid biosynthesis; L-histidine biosynthesis; L-histidine from 5-phospho-alpha-D-ribose 1-diphosphate: step 5/9. Functionally, IGPS catalyzes the conversion of PRFAR and glutamine to IGP, AICAR and glutamate. The HisF subunit catalyzes the cyclization activity that produces IGP and AICAR from PRFAR using the ammonia provided by the HisH subunit. This chain is Imidazole glycerol phosphate synthase subunit HisF, found in Opitutus terrae (strain DSM 11246 / JCM 15787 / PB90-1).